We begin with the raw amino-acid sequence, 852 residues long: Homeobox-leucine zipper protein ATHB-14 (852 aa).

Positions 1-25 are disordered; sequence MMMVHSMSRDMMNRESPDKGLDSGK. A compositionally biased stretch (basic and acidic residues) spans 7–22; it reads MSRDMMNRESPDKGLD. A DNA-binding region (homeobox) is located at residues 22–85; the sequence is DSGKYVRYTP…NRRCREKQRK (64 aa). Positions 80–122 form a coiled coil; it reads REKQRKEAARLQTVNRKLNAMNKLLMEENDRLQKQVSNLVYEN. The ZIP domain stretch occupies residues 80 to 130; sequence REKQRKEAARLQTVNRKLNAMNKLLMEENDRLQKQVSNLVYENGHMKHQLH. The span at 130–148 shows a compositional bias: polar residues; that stretch reads HTASGTTTDNSCESVVVSG. Residues 130 to 166 are disordered; that stretch reads HTASGTTTDNSCESVVVSGQQHQQQNPNPQHQQRDAN. Over residues 149-160 the composition is skewed to low complexity; the sequence is QQHQQQNPNPQH. One can recognise an START domain in the interval 164–392; it reads DANNPAGLLS…IAQETSGEVQ (229 aa).

It belongs to the HD-ZIP homeobox family. Class III subfamily. Homodimer. Heterodimer with ZPR3. Interacts with ESR1 and ESR2. Interacts with ZPR3. Expressed in the center of the meristem and on the adaxial side of the leaves.

The protein resides in the nucleus. With respect to regulation, inhibited by ZPR3. Probable transcription factor involved in the determination of adaxial-abaxial polarity in ovule primordium. Specifies adaxial leaf fates. This chain is Homeobox-leucine zipper protein ATHB-14 (ATHB-14), found in Arabidopsis thaliana (Mouse-ear cress).